Here is a 727-residue protein sequence, read N- to C-terminus: Prolyl endopeptidase-like (727 aa).

Active-site charge relay system residues include S559, D645, and H690.

It belongs to the peptidase S9A family. As to quaternary structure, homodimer. Interacts with the AP-1 complex.

Its subcellular location is the cytoplasm. It is found in the cytosol. The protein resides in the golgi apparatus. The protein localises to the trans-Golgi network. It localises to the cytoskeleton. Its subcellular location is the nucleus. Functionally, serine peptidase whose precise substrate specificity remains unclear. Does not cleave peptides after a arginine or lysine residue. Regulates trans-Golgi network morphology and sorting by regulating the membrane binding of the AP-1 complex. May play a role in the regulation of synaptic vesicle exocytosis. This chain is Prolyl endopeptidase-like (PREPL), found in Pongo abelii (Sumatran orangutan).